Reading from the N-terminus, the 369-residue chain is Flagellar P-ring protein 1 (369 aa).

The signal sequence occupies residues 1-23; it reads MRKQSLVTLLMVLLSLVWLPASA.

The protein belongs to the FlgI family. In terms of assembly, the basal body constitutes a major portion of the flagellar organelle and consists of four rings (L,P,S, and M) mounted on a central rod.

Its subcellular location is the periplasm. The protein resides in the bacterial flagellum basal body. Assembles around the rod to form the L-ring and probably protects the motor/basal body from shearing forces during rotation. The sequence is that of Flagellar P-ring protein 1 from Yersinia pseudotuberculosis serotype I (strain IP32953).